Reading from the N-terminus, the 159-residue chain is Methyl-coenzyme M reductase operon protein D (159 aa).

MCR is composed of three subunits: alpha, beta, and gamma. The function of proteins C and D is not known.

This is Methyl-coenzyme M reductase operon protein D (mcrD) from Methanococcus voltae.